The following is a 476-amino-acid chain: NADH-quinone oxidoreductase subunit N (476 aa).

14 helical membrane passes run 8–28 (ITTELALFILGLATFVLGLLV), 35–55 (GLGSFALLGLLLVLGITIINW), 71–91 (YATFFKILCLISAILVVLGSF), 102–122 (FEYYSTVIFTTLGMVVMASAG), 124–144 (FITLYLGLELMTISFVILVAF), 159–179 (ILLAGLSSAVLLYGLSLVYGA), 201–221 (LIVGVVMLVAGLGFKISAVPF), 239–259 (FLAVGSKAASFAVLLRLFAGG), 267–287 (WTLLVAVLAALSMLIGNLVAI), 295–315 (MLAYSSIAQAGYIMVGLVSAT), 322–342 (VMFYAFLYVFATIGAFTVVAI), 366–386 (ASVMLICLLSMAGIPPLAGFV), 405–425 (LGLIMSMVSVYYYLRVALVMF), and 437–457 (VGGAATITLVITMVATIILGI).

The protein belongs to the complex I subunit 2 family. As to quaternary structure, NDH-1 is composed of 14 different subunits. Subunits NuoA, H, J, K, L, M, N constitute the membrane sector of the complex.

The protein localises to the cell membrane. The enzyme catalyses a quinone + NADH + 5 H(+)(in) = a quinol + NAD(+) + 4 H(+)(out). Its function is as follows. NDH-1 shuttles electrons from NADH, via FMN and iron-sulfur (Fe-S) centers, to quinones in the respiratory chain. The immediate electron acceptor for the enzyme in this species is believed to be a menaquinone. Couples the redox reaction to proton translocation (for every two electrons transferred, four hydrogen ions are translocated across the cytoplasmic membrane), and thus conserves the redox energy in a proton gradient. The protein is NADH-quinone oxidoreductase subunit N of Desulforamulus reducens (strain ATCC BAA-1160 / DSM 100696 / MI-1) (Desulfotomaculum reducens).